The sequence spans 550 residues: Zorya protein ZorA (550 aa).

3 consecutive transmembrane segments (helical) span residues 16-36 (TLITNIFIWAVIFVFLSAWWC), 52-72 (LMGALGILGTFIGIIIGLLNF), and 92-112 (FITSIVGMFFAILFNGMDAFF).

This sequence belongs to the MotA family.

It is found in the cell inner membrane. Component of antiviral defense system Zorya type II, composed of ZorA, ZorB and ZorE. Expression of Zorya type II in E.coli (strain MG1655) confers resistance to phages SECphi7 and T7. While most T7 infected Zorya-containing cells undergo abortive infection, a minority produce viable phage progeny. These eventually accumulate to a high multiplicity of infection, leading to culture collapse by 170 minutes after initial infection. ZorA and ZorB probably assemble in the cell inner membrane and exert their effect there. The polypeptide is Zorya protein ZorA (Escherichia coli (strain ATCC 8739 / DSM 1576 / NBRC 3972 / NCIMB 8545 / WDCM 00012 / Crooks)).